The following is a 520-amino-acid chain: Calcium and calcium/calmodulin-dependent serine/threonine-protein kinase (520 aa).

Residues 13 to 302 (YEVVDVLGKG…ANDLLKHPWV (290 aa)) enclose the Protein kinase domain. ATP-binding positions include 19–27 (LGKGGFSVV) and K44. The active-site Proton acceptor is the D167. Residues 227–243 (MWSLGVILYILLSGCPP) form a helical membrane-spanning segment. T267 is modified (phosphothreonine; by autocatalysis). Residues 325–338 (ARRKLRAAAIASVL) form a calmodulin-binding region. Residues 346–368 (TKKLKNLLGSHDMKSEELENLRA) adopt a coiled-coil conformation. 4 consecutive EF-hand domains span residues 361–395 (EELE…MKMN), 396–431 (SLIP…LRNS), 432–467 (QGDD…LPED), and 474–509 (TEPG…DSSL). D409, N411, D413, T415, E420, D445, D447, S449, C451, E456, D487, N489, D491, and E498 together coordinate Ca(2+).

It belongs to the protein kinase superfamily. CAMK Ser/Thr protein kinase family. CaMK subfamily. Autophosphorylation stimulated by calcium and inhibited by calcium/calmodulin. Occurs probably by an intermolecular mechanism.

The protein localises to the membrane. The catalysed reaction is L-seryl-[protein] + ATP = O-phospho-L-seryl-[protein] + ADP + H(+). It carries out the reaction L-threonyl-[protein] + ATP = O-phospho-L-threonyl-[protein] + ADP + H(+). Its activity is regulated as follows. Activated by calcium/calmodulin binding after calcium-induced autophosphorylation. Autophosphorylation is associated with a time-dependent loss of kinase activity sensitive to reaction pH and ATP concentration. In vitro inactivation leads to the formation of network-like structures. Protein kinase that may be involved in microsporogenesis. This is Calcium and calcium/calmodulin-dependent serine/threonine-protein kinase (CCAMK) from Lilium longiflorum (Trumpet lily).